The primary structure comprises 283 residues: Bifunctional protein FolD (283 aa).

NADP(+) is bound by residues 165 to 167 (GRS), Ser190, and Val231.

It belongs to the tetrahydrofolate dehydrogenase/cyclohydrolase family. In terms of assembly, homodimer.

It catalyses the reaction (6R)-5,10-methylene-5,6,7,8-tetrahydrofolate + NADP(+) = (6R)-5,10-methenyltetrahydrofolate + NADPH. The catalysed reaction is (6R)-5,10-methenyltetrahydrofolate + H2O = (6R)-10-formyltetrahydrofolate + H(+). It participates in one-carbon metabolism; tetrahydrofolate interconversion. Its function is as follows. Catalyzes the oxidation of 5,10-methylenetetrahydrofolate to 5,10-methenyltetrahydrofolate and then the hydrolysis of 5,10-methenyltetrahydrofolate to 10-formyltetrahydrofolate. The chain is Bifunctional protein FolD from Bacillus pumilus (strain SAFR-032).